The following is a 181-amino-acid chain: MENTQENPATQSAEDIGSAKQAAQGAAPAAEAADAALAEAQAKVAELQESYLRAKAETENVRRRAQDDVSKAHKFAIESFAEHLLPVLDSLEAAAVDTSGDIAKVREGVELTLRQLTSALEKGRVVAINPVGEKFDPHQHQAISMVPAEQEPNTVVAVLQKGYMIADRVLRPALVTVAQPK.

Residues 1 to 13 are compositionally biased toward polar residues; it reads MENTQENPATQSA. Residues 1–34 are disordered; sequence MENTQENPATQSAEDIGSAKQAAQGAAPAAEAAD. Low complexity predominate over residues 19-34; the sequence is AKQAAQGAAPAAEAAD.

This sequence belongs to the GrpE family. Homodimer.

Its subcellular location is the cytoplasm. Functionally, participates actively in the response to hyperosmotic and heat shock by preventing the aggregation of stress-denatured proteins, in association with DnaK and GrpE. It is the nucleotide exchange factor for DnaK and may function as a thermosensor. Unfolded proteins bind initially to DnaJ; upon interaction with the DnaJ-bound protein, DnaK hydrolyzes its bound ATP, resulting in the formation of a stable complex. GrpE releases ADP from DnaK; ATP binding to DnaK triggers the release of the substrate protein, thus completing the reaction cycle. Several rounds of ATP-dependent interactions between DnaJ, DnaK and GrpE are required for fully efficient folding. The polypeptide is Protein GrpE (Burkholderia vietnamiensis (strain G4 / LMG 22486) (Burkholderia cepacia (strain R1808))).